The primary structure comprises 257 residues: 1-(5-phosphoribosyl)-5-[(5-phosphoribosylamino)methylideneamino] imidazole-4-carboxamide isomerase (257 aa).

The active-site Proton acceptor is Asp-8. Asp-129 serves as the catalytic Proton donor.

The protein belongs to the HisA/HisF family.

Its subcellular location is the cytoplasm. The enzyme catalyses 1-(5-phospho-beta-D-ribosyl)-5-[(5-phospho-beta-D-ribosylamino)methylideneamino]imidazole-4-carboxamide = 5-[(5-phospho-1-deoxy-D-ribulos-1-ylimino)methylamino]-1-(5-phospho-beta-D-ribosyl)imidazole-4-carboxamide. The protein operates within amino-acid biosynthesis; L-histidine biosynthesis; L-histidine from 5-phospho-alpha-D-ribose 1-diphosphate: step 4/9. This is 1-(5-phosphoribosyl)-5-[(5-phosphoribosylamino)methylideneamino] imidazole-4-carboxamide isomerase from Cyanothece sp. (strain PCC 7425 / ATCC 29141).